The chain runs to 557 residues: Membrane protein insertase YidC (557 aa).

Residues 1–21 (MNWLRNSLIAAILVITYVLFI) traverse the membrane as a helical segment. The disordered stretch occupies residues 52-71 (SDDAVASSATEESDVPEVSV). Transmembrane regions (helical) follow at residues 346 to 366 (TIDY…LDFI), 369 to 389 (LVGN…AVFF), 439 to 459 (FGGC…YWMI), 470 to 490 (FFLW…PLLM), and 517 to 537 (PIGF…YWVV).

The protein belongs to the OXA1/ALB3/YidC family. Type 1 subfamily. Interacts with the Sec translocase complex via SecD. Specifically interacts with transmembrane segments of nascent integral membrane proteins during membrane integration.

Its subcellular location is the cell inner membrane. Its function is as follows. Required for the insertion and/or proper folding and/or complex formation of integral membrane proteins into the membrane. Involved in integration of membrane proteins that insert both dependently and independently of the Sec translocase complex, as well as at least some lipoproteins. Aids folding of multispanning membrane proteins. This chain is Membrane protein insertase YidC, found in Saccharophagus degradans (strain 2-40 / ATCC 43961 / DSM 17024).